A 29-amino-acid chain; its full sequence is U1-pseudomyrmecitoxin-Pt1 subunit SS1 (29 aa).

This sequence belongs to the myrmexin family. Heterodimer composed of subunit SS1 and subunit LS1 (U1-PSDTX-Pt1b), and heterodimer composed of subunit SS1 and LS2 (U1-PSDTX-Pt1a); disulfide-linked. As to expression, expressed by the venom gland.

It is found in the secreted. This heterodimer may have anti-inflammatory properties, since the myrmexin complex (composed of 6 SS-LS heterodimers) inhibits carrageenin-induced edema in a dose-dependent manner (after subcutaneous injection into rats). The chain is U1-pseudomyrmecitoxin-Pt1 subunit SS1 from Pseudomyrmex triplarinus (Ant).